We begin with the raw amino-acid sequence, 267 residues long: Small ribosomal subunit protein uS2 (267 aa).

The interval 237 to 267 is disordered; it reads IGESAAAPSEPALETASAEATAEGEQPGSQA. Low complexity predominate over residues 238–261; that stretch reads GESAAAPSEPALETASAEATAEGE.

It belongs to the universal ribosomal protein uS2 family.

The chain is Small ribosomal subunit protein uS2 from Chelativorans sp. (strain BNC1).